A 336-amino-acid polypeptide reads, in one-letter code: Pyridoxal 5'-phosphate synthase subunit PdxS (336 aa).

A D-ribose 5-phosphate-binding site is contributed by D33. Catalysis depends on K90, which acts as the Schiff-base intermediate with D-ribose 5-phosphate. Residue G162 participates in D-ribose 5-phosphate binding. Residue R174 coordinates D-glyceraldehyde 3-phosphate. D-ribose 5-phosphate-binding positions include G260 and 281 to 282 (GS).

The protein belongs to the PdxS/SNZ family. As to quaternary structure, in the presence of PdxT, forms a dodecamer of heterodimers.

The catalysed reaction is aldehydo-D-ribose 5-phosphate + D-glyceraldehyde 3-phosphate + L-glutamine = pyridoxal 5'-phosphate + L-glutamate + phosphate + 3 H2O + H(+). It functions in the pathway cofactor biosynthesis; pyridoxal 5'-phosphate biosynthesis. Functionally, catalyzes the formation of pyridoxal 5'-phosphate from ribose 5-phosphate (RBP), glyceraldehyde 3-phosphate (G3P) and ammonia. The ammonia is provided by the PdxT subunit. Can also use ribulose 5-phosphate and dihydroxyacetone phosphate as substrates, resulting from enzyme-catalyzed isomerization of RBP and G3P, respectively. The chain is Pyridoxal 5'-phosphate synthase subunit PdxS from Picrophilus torridus (strain ATCC 700027 / DSM 9790 / JCM 10055 / NBRC 100828 / KAW 2/3).